We begin with the raw amino-acid sequence, 190 residues long: Peptidyl-tRNA hydrolase (190 aa).

Residue Y14 participates in tRNA binding. The active-site Proton acceptor is H19. The tRNA site is built by Y64, N66, and N112.

This sequence belongs to the PTH family. Monomer.

The protein localises to the cytoplasm. The enzyme catalyses an N-acyl-L-alpha-aminoacyl-tRNA + H2O = an N-acyl-L-amino acid + a tRNA + H(+). Hydrolyzes ribosome-free peptidyl-tRNAs (with 1 or more amino acids incorporated), which drop off the ribosome during protein synthesis, or as a result of ribosome stalling. Functionally, catalyzes the release of premature peptidyl moieties from peptidyl-tRNA molecules trapped in stalled 50S ribosomal subunits, and thus maintains levels of free tRNAs and 50S ribosomes. The sequence is that of Peptidyl-tRNA hydrolase from Chlorobium phaeovibrioides (strain DSM 265 / 1930) (Prosthecochloris vibrioformis (strain DSM 265)).